A 310-amino-acid polypeptide reads, in one-letter code: Tagatose-6-phosphate kinase (310 aa).

It belongs to the carbohydrate kinase PfkB family. LacC subfamily.

It carries out the reaction D-tagatofuranose 6-phosphate + ATP = D-tagatofuranose 1,6-bisphosphate + ADP + H(+). The protein operates within carbohydrate metabolism; D-tagatose 6-phosphate degradation; D-glyceraldehyde 3-phosphate and glycerone phosphate from D-tagatose 6-phosphate: step 1/2. The polypeptide is Tagatose-6-phosphate kinase (Staphylococcus aureus (strain USA300 / TCH1516)).